We begin with the raw amino-acid sequence, 127 residues long: uncharacterized protein (127 aa).

The next 2 membrane-spanning stretches (helical) occupy residues 48–68 (LYSL…PLSI) and 83–103 (VFLF…CLID).

The protein localises to the membrane. This is an uncharacterized protein from Saccharomyces cerevisiae (strain ATCC 204508 / S288c) (Baker's yeast).